We begin with the raw amino-acid sequence, 31 residues long: Palustrin-2c (31 aa).

Residues Cys-23 and Cys-29 are joined by a disulfide bond.

Expressed by the skin glands.

The protein resides in the secreted. Antimicrobial activity against Gram-negative bacterium E.coli. In Lithobates palustris (Pickerel frog), this protein is Palustrin-2c.